The sequence spans 426 residues: Metacaspase-1B (426 aa).

Over residues 1 to 14 (MSGYPGAGYNGGGY) the composition is skewed to gly residues. Residues 1–111 (MSGYPGAGYN…QAPPPPPQAP (111 aa)) form a disordered region. The segment covering 21-68 (QYGGYYPPQPAYNAYQQPPPQQQQYMVYHQPSPGPQQHQHWNPQQQTP) has biased composition (low complexity). Catalysis depends on residues His217 and Cys273.

The protein belongs to the peptidase C14B family.

In terms of biological role, involved in cell death (apoptosis). The polypeptide is Metacaspase-1B (casB) (Neurospora crassa (strain ATCC 24698 / 74-OR23-1A / CBS 708.71 / DSM 1257 / FGSC 987)).